Here is a 133-residue protein sequence, read N- to C-terminus: Peptide methionine sulfoxide reductase MsrB (133 aa).

A MsrB domain is found at 8–130 (LDVWRELLSD…NSASLRLKPR (123 aa)). Cys-47, Cys-50, Cys-96, and Cys-99 together coordinate Zn(2+). Cys-119 functions as the Nucleophile in the catalytic mechanism.

This sequence belongs to the MsrB Met sulfoxide reductase family. Zn(2+) is required as a cofactor.

It carries out the reaction L-methionyl-[protein] + [thioredoxin]-disulfide + H2O = L-methionyl-(R)-S-oxide-[protein] + [thioredoxin]-dithiol. The sequence is that of Peptide methionine sulfoxide reductase MsrB from Azotobacter vinelandii (strain DJ / ATCC BAA-1303).